Consider the following 383-residue polypeptide: Lipid-A-disaccharide synthase (383 aa).

It belongs to the LpxB family.

It catalyses the reaction 2-N,3-O-bis[(3R)-3-hydroxytetradecanoyl]-alpha-D-glucosaminyl 1-phosphate + UDP-2-N,3-O-bis[(3R)-3-hydroxytetradecanoyl]-alpha-D-glucosamine = lipid A disaccharide (E. coli) + UDP + H(+). It carries out the reaction a lipid X + a UDP-2-N,3-O-bis[(3R)-3-hydroxyacyl]-alpha-D-glucosamine = a lipid A disaccharide + UDP + H(+). It participates in glycolipid biosynthesis; lipid IV(A) biosynthesis; lipid IV(A) from (3R)-3-hydroxytetradecanoyl-[acyl-carrier-protein] and UDP-N-acetyl-alpha-D-glucosamine: step 5/6. Condensation of UDP-2,3-diacylglucosamine and 2,3-diacylglucosamine-1-phosphate to form lipid A disaccharide, a precursor of lipid A, a phosphorylated glycolipid that anchors the lipopolysaccharide to the outer membrane of the cell. The protein is Lipid-A-disaccharide synthase of Pectobacterium carotovorum subsp. carotovorum (strain PC1).